The following is a 627-amino-acid chain: Anti-CBASS protein Acb1 (627 aa).

Tyr105 contributes to the 3',3'-cGAMP binding site. Residue Tyr105 participates in 3',3'-cUAMP binding. The interval 437-474 (LADQPETESANENTEQPESGEEGEEGQPTRRAANDAKP) is disordered. Catalysis depends on residues His508, Thr510, His584, and Thr586. 2 residues coordinate 3',3'-cGAMP: Glu614 and Trp620. 2 residues coordinate 3',3'-cUAMP: Glu614 and Trp620.

The protein belongs to the anti-CBASS protein Acb1 family.

It carries out the reaction 3',3'-cUAMP + H2O = U[3'-5']pAp[3'] + H(+). It catalyses the reaction 3',3',3'-c-tri-AMP + H2O = A[3'-5']pA[3'-5']pAp[3'] + H(+). The enzyme catalyses 3',3',3'-cAAG + H2O = G[3'-5']pA[3'-5']pAp[3'] + H(+). The catalysed reaction is 3',3',3'-cAAG + H2O = A[3'-5']pG[3'-5']pAp[3'] + H(+). It carries out the reaction 3',3'-cGAMP + H2O = G[3'-5']pAp[3'] + H(+). Functionally, counteracts or regulates the endogenous CBASS antiviral defense system. Phosphodiesterase that enables metal-independent hydrolysis of the host cyclic di- and trinucleotide CBASS signals such as 3'3'-cGAMP, 3'3'cUA, and 3'3'3'-cAAA. This Caulobacter sp. (strain RHG1) protein is Anti-CBASS protein Acb1.